A 184-amino-acid chain; its full sequence is GTP cyclohydrolase 1 (184 aa).

Zn(2+) contacts are provided by Cys-75, His-78, and Cys-146.

This sequence belongs to the GTP cyclohydrolase I family. As to quaternary structure, homomer.

The catalysed reaction is GTP + H2O = 7,8-dihydroneopterin 3'-triphosphate + formate + H(+). The protein operates within cofactor biosynthesis; 7,8-dihydroneopterin triphosphate biosynthesis; 7,8-dihydroneopterin triphosphate from GTP: step 1/1. The polypeptide is GTP cyclohydrolase 1 (Finegoldia magna (strain ATCC 29328 / DSM 20472 / WAL 2508) (Peptostreptococcus magnus)).